We begin with the raw amino-acid sequence, 847 residues long: MAQVLHVPAPFPGTPGQASSAAFPNKEPDPPYSVETPYGYRLDLDFLKYVDDIEKGHTLRRVPVQRRPRLGSLPRGPGSWWTSTESLCSDASGDSRHSAYSYCGRGFYPQYGALETRSGTNPRVERTLLDARRRLEDQAAAPSSGGLGSLTPSAAGSTSSLAGVGLLPPTPRSSGLSTPVAPSAGHLAHVREQMAGALRKLRQLEEQVKLIPVLQVKLSVLQEEKRQLTVQLKSQKFLGHPSGTRSRSELCLDLPEAPDDPAVLETRSVGTWVRERDLGIPDGEAALVAKVAVLETQLKKALQELRAAQTQQVDLQPQAWPPPDTQVRVDTVRVVEGPREVEVAASTAAGAPAQRAQSLEPYGAGLKALATSAENTLVFRSHEVVETMCPLPTASTSNMHTAKKISITERNCTGAARMADPPPSPAEPSPSSPYPAAEPENPAPAAQDTTDRELTRPVASQDSQAAEGAGGASLGVQSALKRKEVPADPDVHQRNLQFVGINGGYESSSEDSSTAENSEHESTENEAPEPPVRVLSTAEGPQLRPLGPAVGKTSQDERQLSQESQRVPEAKVAPGPDPEEEIRMDLSPDLISACLALEKYLENPNALTERELKVAYTTVLQEWLRLACRSDAHPELVRRHLVTFRAMSARLLDYVVNIADSNGNTALHYSVSHANFPVVRQLLDSGVCQVDKLNRAGYSPIMLTALATLKTQDDIDTILQLFRLGNVNAKASQAGQTALMLAVSHGRVDVVKALLACEVDVNMQDEDGSTALMCACEHGHKEITGLLLAVPSCDISLTDRDGSTALMVALDAGQSEIASMLYSRMNIKCSFAPMSDYESPASSSAEE.

Residues 1-32 (MAQVLHVPAPFPGTPGQASSAAFPNKEPDPPY) form a disordered region. Residues 1–72 (MAQVLHVPAP…PVQRRPRLGS (72 aa)) form an interaction with AIFM1 region. Ser-19, Ser-83, Ser-86, Ser-89, and Ser-92 each carry phosphoserine. At Arg-105 the chain carries Omega-N-methylarginine. The segment at 161-182 (LAGVGLLPPTPRSSGLSTPVAP) is disordered. The residue at position 170 (Thr-170) is a Phosphothreonine. Coiled coils occupy residues 187 to 207 (LAHV…LEEQ) and 284 to 311 (EAAL…AQTQ). Thr-331 bears the Phosphothreonine mark. Ser-358 carries the post-translational modification Phosphoserine. 2 disordered regions span residues 414-473 (GAAR…GGAS) and 502-581 (NGGY…PEEE). Residues 420–433 (DPPPSPAEPSPSSP) show a composition bias toward pro residues. Composition is skewed to low complexity over residues 434–446 (YPAA…APAA) and 506–516 (ESSSEDSSTAE). Ser-536 is modified (phosphoserine). The stretch at 610 to 647 (RELKVAYTTVLQEWLRLACRSDAHPELVRRHLVTFRAM) is one ANK 0; degenerate repeat. ANK repeat units lie at residues 662-692 (NGNT…QVDK), 696-729 (AGYS…NVNA), 734-763 (AGQT…DVNM), 767-797 (DGST…DISL), and 801-831 (DGST…KCSF). The interaction with NCOA1 stretch occupies residues 665–831 (TALHYSVSHA…YSRMNIKCSF (167 aa)).

As to quaternary structure, interacts (non-phosphorylated form) with NCOA1; NCOA2 AND NCOA3. Interacts with AIFM1. Interacts with ARHGDIA; the interaction is direct and may regulate the interaction of ARHGDIA with RHOA, RAC1 and CDC42. Interacts (via ANK repeats 1-5) with KIF21A. Phosphorylated by casein kinase II upon estrogen stimulation. Phosphorylation induces the release by KANK2 of NCOA1 and its translocation to the nucleus where NCOA1 can activate gene transcription. Expressed by podocytes in kidney glomeruli (at protein level).

The protein localises to the cytoplasm. It is found in the mitochondrion. Its function is as follows. Involved in transcription regulation by sequestering in the cytoplasm nuclear receptor coactivators such as NCOA1, NCOA2 and NCOA3. Involved in regulation of caspase-independent apoptosis by sequestering the proapoptotic factor AIFM1 in mitochondria. Pro-apoptotic stimuli can induce its proteasomal degradation allowing the translocation of AIFM1 to the nucleus to induce apoptosis. Involved in the negative control of vitamin D receptor signaling pathway. Involved in actin stress fibers formation through its interaction with ARHGDIA and the regulation of the Rho signaling pathway. May thereby play a role in cell adhesion and migration, regulating for instance podocytes migration during development of the kidney. Through the Rho signaling pathway may also regulate cell proliferation. The chain is KN motif and ankyrin repeat domain-containing protein 2 from Rattus norvegicus (Rat).